A 388-amino-acid polypeptide reads, in one-letter code: Succinate--CoA ligase [ADP-forming] subunit beta (388 aa).

The ATP-grasp domain maps to 9-244 (KQLFAEYGLP…PSQDDPREAH (236 aa)). Residues lysine 46, 53 to 55 (GRG), glutamate 99, threonine 102, and glutamate 107 contribute to the ATP site. Mg(2+)-binding residues include asparagine 199 and aspartate 213. Substrate contacts are provided by residues asparagine 264 and 321–323 (GIV).

This sequence belongs to the succinate/malate CoA ligase beta subunit family. In terms of assembly, heterotetramer of two alpha and two beta subunits. Mg(2+) serves as cofactor.

It carries out the reaction succinate + ATP + CoA = succinyl-CoA + ADP + phosphate. It catalyses the reaction GTP + succinate + CoA = succinyl-CoA + GDP + phosphate. It participates in carbohydrate metabolism; tricarboxylic acid cycle; succinate from succinyl-CoA (ligase route): step 1/1. Succinyl-CoA synthetase functions in the citric acid cycle (TCA), coupling the hydrolysis of succinyl-CoA to the synthesis of either ATP or GTP and thus represents the only step of substrate-level phosphorylation in the TCA. The beta subunit provides nucleotide specificity of the enzyme and binds the substrate succinate, while the binding sites for coenzyme A and phosphate are found in the alpha subunit. This chain is Succinate--CoA ligase [ADP-forming] subunit beta, found in Stutzerimonas stutzeri (strain A1501) (Pseudomonas stutzeri).